The following is a 699-amino-acid chain: Elongation factor G (699 aa).

A tr-type G domain is found at 8-288 (EDYRNFGIMA…AVVDYLPSPL (281 aa)). Residues 17-24 (AHIDAGKT), 86-90 (DTPGH), and 140-143 (NKMD) each bind GTP.

Belongs to the TRAFAC class translation factor GTPase superfamily. Classic translation factor GTPase family. EF-G/EF-2 subfamily.

The protein localises to the cytoplasm. Functionally, catalyzes the GTP-dependent ribosomal translocation step during translation elongation. During this step, the ribosome changes from the pre-translocational (PRE) to the post-translocational (POST) state as the newly formed A-site-bound peptidyl-tRNA and P-site-bound deacylated tRNA move to the P and E sites, respectively. Catalyzes the coordinated movement of the two tRNA molecules, the mRNA and conformational changes in the ribosome. This Agrobacterium fabrum (strain C58 / ATCC 33970) (Agrobacterium tumefaciens (strain C58)) protein is Elongation factor G.